A 441-amino-acid chain; its full sequence is Inner kinetochore subunit mis17 (441 aa).

Polar residues predominate over residues 160–173 (SSILENSPPNKVQR). The segment at 160–240 (SSILENSPPN…TSSMAPRNLL (81 aa)) is disordered. Residues 174-183 (LSSLDSSQDS) are compositionally biased toward low complexity. A compositionally biased stretch (polar residues) spans 192-201 (VTGTTFSSQA). Residues 217–233 (SLTNQSSSLQSSLQTSS) show a composition bias toward low complexity.

The protein belongs to the CENP-U/AME1 family. In terms of assembly, component of the heterotetrameric kinetochore subcomplex COMA, which consists of fta2, fta7, mal2 and mis17. The COMA subcomplex is part of a larger constitutive centromere-associated network (CCAN) (also known as central kinetochore Sim4 complex in fission yeast), which is composed of at least cnl2, cnp3, cnp20, fta1, fta2, fta3, fta4, fta6, fta7, mal2, mhf1, mhf2, mis6, mis15, mis17, sim4 and wip1. Interacts with mis6 and mis15.

Its subcellular location is the nucleus. The protein resides in the chromosome. It is found in the centromere. The protein localises to the kinetochore. Component of the kinetochore, a multiprotein complex that assembles on centromeric DNA and attaches chromosomes to spindle microtubules, mediating chromosome segregation and sister chromatid segregation during meiosis and mitosis. Component of the inner kinetochore COMA complex, which connects centromere-associated proteins and the outer kinetochore. COMA interacts with other inner kinetochore proteins to form the inner kinetochore constitutive centromere-associated network (CCAN), which serves as a structural platform for outer kinetochore assembly. This Schizosaccharomyces pombe (strain 972 / ATCC 24843) (Fission yeast) protein is Inner kinetochore subunit mis17 (mis17).